The primary structure comprises 431 residues: Glucose-1-phosphate adenylyltransferase (431 aa).

K39 contributes to the beta-D-fructose 1,6-bisphosphate binding site. R40, H46, and R52 together coordinate AMP. Residue Y114 coordinates alpha-D-glucose 1-phosphate. R130 lines the AMP pocket. Alpha-D-glucose 1-phosphate contacts are provided by residues G179, 194 to 195 (EK), and S212. AMP contacts are provided by E370 and R386. Residues 419 to 423 (REMLR) and 429 to 431 (QER) contribute to the beta-D-fructose 1,6-bisphosphate site.

It belongs to the bacterial/plant glucose-1-phosphate adenylyltransferase family. As to quaternary structure, homotetramer.

The catalysed reaction is alpha-D-glucose 1-phosphate + ATP + H(+) = ADP-alpha-D-glucose + diphosphate. It functions in the pathway glycan biosynthesis; glycogen biosynthesis. Allosterically activated by fructose-1,6-bisphosphate (F16BP) and inhibited by AMP. Involved in the biosynthesis of ADP-glucose, a building block required for the elongation reactions to produce glycogen. Catalyzes the reaction between ATP and alpha-D-glucose 1-phosphate (G1P) to produce pyrophosphate and ADP-Glc. This chain is Glucose-1-phosphate adenylyltransferase, found in Salmonella paratyphi C (strain RKS4594).